Consider the following 1053-residue polypeptide: Serine/threonine-protein phosphatase 6 regulatory ankyrin repeat subunit A (1053 aa).

ANK repeat units lie at residues 40 to 69 (EKRTPLHAAAYLGDAEIIELLILSGARVNA), 73 to 102 (KWLTPLHRAVASCSEEAVQILLKHSADVNA), 106 to 135 (NWQTPLHIAAANKAVKCAESLVPLLSNVNV), 139 to 168 (AGRTALHHAAFSGHGEMVKLLLSRGANINA), 172 to 201 (KDRRAIHWAAYMGHIEVVKLLVSHGAEVTC), 205 to 234 (KSYTPLHAAASSGMISVVKYLLDLGVDMNE), 238 to 267 (YGNTPLHVACYNGQDVVVNELIDCGANVNQ), 271 to 301 (KGFTPLHFAAASTHGALCLELLVGNGADVNM), 305 to 334 (DGKTPLHMTALHGRFSRSQTIIQSGAVIDC), 338 to 367 (NGNTPLHIAARYGHELLINTLITSGADTAK), 371 to 400 (HGMFPLHLAALSGFSDCCRKLLSSGFDIDT), 404 to 433 (FGRTCLHAAAAGGNLECLNLLLNTGADFNK), 437 to 466 (FGRSPLHYAAANCNYQCLFALVGSGASVND), 470 to 500 (RGCTPLHYAATSDTDGKCLEYLLRNDANPGI), 504 to 534 (QGYNAVHYSAAYGHRLCLQLIASETPLDVLM), 549 to 578 (ATISPLHLAAYHGHHQALEVLVQSLLDLDV), 582 to 611 (SGRTPLDLAAFKGHVECVDVLINQGASILV), 616 to 645 (LKRTPIHAAATNGHSECLRLLIGNAEPQNA), 652 to 681 (NGQTPLMLSVLNGHTDCVYSLLNKGANVDA), 685 to 714 (WGRTALHRGAVTGHEECVDALLQHGAKCLL), 718 to 747 (RGRTPIHLSAACGHIGVLGALLQSATSVDA), 755 to 786 (HGYTALHWACYNGHETCVELLLEQDVFQKIDG), 788 to 817 (AFSPLHCAVINDNEGAAEMLIDSLGASIVN), 822 to 851 (KGRTPLHAAAFTDHVECLQLLLSQNAQVNS), 855 to 885 (TGKTPLMMAAENGQTNTVEMLVSSASADLTL), 889 to 918 (SKNTALHLACGKGHETSALLILEKITDRNL), and 925 to 954 (ALQTPLHVAARNGLTMVVQELLGKGASVLA). A phosphoserine mark is found at Ser1007 and Ser1011.

As to quaternary structure, protein phosphatase 6 (PP6) holoenzyme is proposed to be a heterotrimeric complex formed by the catalytic subunit, a SAPS domain-containing subunit (PP6R) and an ankyrin repeat-domain containing regulatory subunit (ARS). Interacts with PPP1C and HNRPK. Interacts with PPP6C, PPP6R1 and PPP6R3. Post-translationally, ubiquitinated by the ECS(RAB40C) complex leading to its degradation and decreased PP6 activity. Widely expressed (at protein level).

It is found in the nucleus. Its subcellular location is the nucleoplasm. The protein resides in the cytoplasm. It localises to the cytosol. The protein localises to the cell projection. It is found in the lamellipodium. Functionally, putative regulatory subunit of protein phosphatase 6 (PP6) that may be involved in the recognition of phosphoprotein substrates. Involved in the PP6-mediated dephosphorylation of NFKBIE opposing its degradation in response to TNF-alpha. Selectively inhibits the phosphatase activity of PPP1C. Targets PPP1C to modulate HNRPK phosphorylation. Involved in the PP6-mediated dephosphorylation of MOB1 and induced focal adhesion assembly during cell migration. This chain is Serine/threonine-protein phosphatase 6 regulatory ankyrin repeat subunit A (Ankrd28), found in Mus musculus (Mouse).